Here is a 427-residue protein sequence, read N- to C-terminus: Piwi protein (427 aa).

Positions 38–167 are mid domain; the sequence is PYEVPSLKYN…VQFVSKLGGK (130 aa). A Piwi domain is found at 110-406; the sequence is GIMLVLPEYN…VAGIIANVNR (297 aa). Residues 118 to 124 form a binds 5'-phosphorylated end of guide DNA region; the sequence is YNTPLYY. The tract at residues 147-148 is binds target DNA; the sequence is RN. The interval 150 to 155 is binds guide DNA; sequence TFYVDN. The a divalent metal cation site is built by glutamine 159 and leucine 427. Residues 168–427 are PIWI domain; sequence PWILNVDPEK…RSLQTNPWFL (260 aa).

Belongs to the argonaute family. Short pAgo subfamily. Homodimer probably stabilized by DNA. Each subunit is capable of interacting with a DNA molecule. Requires a divalent metal cation as cofactor.

Might play a role in defense against invading genetic elements, using short nucleic acid sequences as guides to bind complementary target strands, resulting in slicing of the target nucleic acid. Binds nucleic acids with decreasing affinity in the following order; ssDNA, ssRNA, dsDNA, RNA-DNA, RNA-RNA. Association of the 5' seed region of the guide strand (nucleotides 2-7) with AfPiwi increases affinity for the corresponding target strand; the greatest increase in affinity is for guide DNA with target RNA. The polypeptide is Piwi protein (Archaeoglobus fulgidus (strain ATCC 49558 / DSM 4304 / JCM 9628 / NBRC 100126 / VC-16)).